A 277-amino-acid polypeptide reads, in one-letter code: MSSKSQLTYSARASKHPNALVKKLFEVAEAKKTNVTVSADVTTTKELLDLADRLGPYIAVIKTHIDILSDFSEETITGLKALAEKHNFLIFEDRKFIDIGNTVQKQYHGGTLRISEWAHIINCSILPGEGIVEALAQTASAEDFPYGSERGLLILAEMTSKGSLATGQYTTSSVDYARKYKKFVMGFVSTRHLGEVQSEVSSPSEEEDFVVFTTGVNLSSKGDKLGQQYQTPESAVGRGADFIIAGRGIYAAPDPVEAAKQYQKEGWDAYLKRVGAQ.

Substrate contacts are provided by residues Asp-40, 62-64 (KTH), 93-102 (DRKFIDIGNT), Tyr-229, and Arg-247. Lys-95 (proton donor) is an active-site residue.

This sequence belongs to the OMP decarboxylase family.

The catalysed reaction is orotidine 5'-phosphate + H(+) = UMP + CO2. It participates in pyrimidine metabolism; UMP biosynthesis via de novo pathway; UMP from orotate: step 2/2. This chain is Orotidine 5'-phosphate decarboxylase (pyrG), found in Aspergillus oryzae (strain ATCC 42149 / RIB 40) (Yellow koji mold).